Consider the following 120-residue polypeptide: UPF0344 protein LMHCC_0278 (120 aa).

Transmembrane regions (helical) follow at residues 3 to 23 (GYIH…ALLI), 33 to 53 (MLQM…IMMV), 62 to 82 (ILAI…EMLL), and 92 to 112 (GMFL…GFYL).

Belongs to the UPF0344 family.

The protein resides in the cell membrane. The sequence is that of UPF0344 protein LMHCC_0278 from Listeria monocytogenes serotype 4a (strain HCC23).